The primary structure comprises 458 residues: Ribosomal protein uS12 methylthiotransferase RimO (458 aa).

The MTTase N-terminal domain occupies Pro8 to Val119. Residues Cys17, Cys53, Cys82, Cys157, Cys161, and Cys164 each coordinate [4Fe-4S] cluster. Residues Thr143 to Glu372 enclose the Radical SAM core domain. The TRAM domain maps to Ser375–Gly446.

This sequence belongs to the methylthiotransferase family. RimO subfamily. [4Fe-4S] cluster is required as a cofactor.

It is found in the cytoplasm. It carries out the reaction L-aspartate(89)-[ribosomal protein uS12]-hydrogen + (sulfur carrier)-SH + AH2 + 2 S-adenosyl-L-methionine = 3-methylsulfanyl-L-aspartate(89)-[ribosomal protein uS12]-hydrogen + (sulfur carrier)-H + 5'-deoxyadenosine + L-methionine + A + S-adenosyl-L-homocysteine + 2 H(+). Catalyzes the methylthiolation of an aspartic acid residue of ribosomal protein uS12. The protein is Ribosomal protein uS12 methylthiotransferase RimO of Synechococcus sp. (strain CC9605).